A 66-amino-acid chain; its full sequence is MSGKKSNLPDGRIPDRLPDGRPAVAWKSRWTEGTLPLWLVATAGGMAVIFVVGLFFYGSYVGVGSA.

A helical transmembrane segment spans residues 37–57 (LWLVATAGGMAVIFVVGLFFY).

This sequence belongs to the PsbJ family. As to quaternary structure, PSII is composed of 1 copy each of membrane proteins PsbA, PsbB, PsbC, PsbD, PsbE, PsbF, PsbH, PsbI, PsbJ, PsbK, PsbL, PsbM, PsbT, PsbX, PsbY, PsbZ, Psb30/Ycf12, peripheral proteins PsbO, CyanoQ (PsbQ), PsbU, PsbV and a large number of cofactors. It forms dimeric complexes.

It is found in the cellular thylakoid membrane. In terms of biological role, one of the components of the core complex of photosystem II (PSII). PSII is a light-driven water:plastoquinone oxidoreductase that uses light energy to abstract electrons from H(2)O, generating O(2) and a proton gradient subsequently used for ATP formation. It consists of a core antenna complex that captures photons, and an electron transfer chain that converts photonic excitation into a charge separation. The protein is Photosystem II reaction center protein J of Synechococcus sp. (strain CC9311).